We begin with the raw amino-acid sequence, 642 residues long: Zinc finger protein 398 (642 aa).

2 disordered regions span residues 1–24 (MAEA…QPLP) and 198–225 (EGEH…PGIS). Residues 143–214 (VAFDDVSIYF…DQAGPEESEI (72 aa)) form the KRAB domain. The span at 207 to 220 (AGPEESEIPTDPSE) shows a compositional bias: acidic residues. K265 is covalently cross-linked (Glycyl lysine isopeptide (Lys-Gly) (interchain with G-Cter in SUMO2)). The C2H2-type 1; atypical zinc finger occupies 343-364 (FSCHHCGKNLSQDMLLTHQCSH). The C2H2-type 2; degenerate zinc-finger motif lies at 370–392 (LPCAQCPKHFTPQADLSSTSQDH). 7 consecutive C2H2-type zinc fingers follow at residues 398-420 (PTCP…LRVH), 427-449 (FPCP…RRAH), 455-477 (FRCA…QRGH), 483-505 (FSCP…QMIH), 511-533 (YPCT…RRLH), 539-561 (FSCP…QRIH), and 567-590 (YPCS…RSGH). Residues 587–615 (RSGHNGGCGGDSDPSGQPPNPPGPLITGL) form a disordered region.

This sequence belongs to the krueppel C2H2-type zinc-finger protein family.

The protein resides in the nucleus. Its function is as follows. Functions as a transcriptional activator. In Homo sapiens (Human), this protein is Zinc finger protein 398 (ZNF398).